Reading from the N-terminus, the 239-residue chain is uncharacterized protein (239 aa).

This is an uncharacterized protein from Escherichia coli O157:H7.